A 60-amino-acid polypeptide reads, in one-letter code: Homeobox protein engrailed-like A (60 aa).

The segment at residues 1–41 (ADQLARLRAEFQANRYLTEERRQNLARELSLNEAQIKIWFQ) is a DNA-binding region (homeobox).

The protein belongs to the engrailed homeobox family.

Its subcellular location is the nucleus. The chain is Homeobox protein engrailed-like A from Myxine glutinosa (Atlantic hagfish).